We begin with the raw amino-acid sequence, 520 residues long: DnaJ homolog l(2)tid, mitochondrial (520 aa).

The N-terminal 62 residues, 1–62, are a transit peptide targeting the mitochondrion; the sequence is MMISCKKLFV…RRLHTTRDLL (62 aa). Arg-30 is subject to Omega-N-methylarginine. The J domain occupies 65 to 130; that stretch reads DYYATLGVAK…QKRREYDTYG (66 aa). Lys-106 carries the post-translational modification N6-acetyllysine. Residues 214–292 form a CR-type zinc finger; it reads GVNKDVNVNV…CEGKGRTVQR (79 aa). Cys-227, Cys-230, Cys-244, Cys-247, Cys-266, Cys-269, Cys-280, and Cys-283 together coordinate Zn(2+). A CXXCXGXG motif; approximate repeat occupies 227 to 234; that stretch reads CPKCAGTK. One copy of the CXXCXGXG motif repeat lies at 244-251; the sequence is CQYCNGTG. A CXXCXGXG motif; approximate repeat occupies 266 to 273; the sequence is CRYCQGTR. The CXXCXGXG motif repeat unit spans residues 280-287; it reads CSECEGKG. The tract at residues 430–520 is disordered; sequence QIHGIANRKD…FISKIKSMFN (91 aa). Low complexity predominate over residues 446–476; it reads AGASEEPGAGAAAKASAAAAGSGASKPGPGA. Basic and acidic residues predominate over residues 479–495; sequence SEGKDQWTDNKKTKAKE. Gly residues predominate over residues 496–511; it reads GGGSGSGQGDGGGGGF.

Interacts with ptc (via C-terminal cytoplasmic region); the interaction is probably direct. Interacts with hh/hedgehog; the interaction is probably mediated by the hedgehog receptor ptc. Post-translationally, appears to produce proteins of differing size. Predicted to have a molecular mass of 56 kDa (TID56) however proteins of 50 kDa, 47 kDa and 40 kDa have been identified and named TID50, TID47 and TID40. TID50 and TID40 localize to the mitochondria while TID47 localizes to the cytoplasm. TID50 is probably TID56 that has undergone mitochondrial transit peptide processing. TID40 and TID47 may be alternately processed proteins or may be isoforms resulting from alternative splicing. Ubiquitously expressed throughout embryonic development. In larvae, expression is seen in sensory organs, gopplet cells, gonads, imaginal disks, proventriculus, fat body, hematopoietic organ, midgut, Malpighian tubules and ring gland.

It is found in the cytoplasm. The protein resides in the cytosol. It localises to the mitochondrion. Its subcellular location is the mitochondrion outer membrane. Its function is as follows. Involved in hh/hedgehog signaling. May act as a tumor suppressor in larval imaginal disks. The protein is DnaJ homolog l(2)tid, mitochondrial of Drosophila melanogaster (Fruit fly).